The sequence spans 152 residues: Xanthine-guanine phosphoribosyltransferase (152 aa).

5-phospho-alpha-D-ribose 1-diphosphate is bound by residues 37–38 and 88–96; these read RG and DDLVDTGNT. D89 contacts Mg(2+). Guanine-binding residues include D92 and I135. Xanthine contacts are provided by D92 and I135. GMP contacts are provided by residues 92-96 and 134-135; these read DTGNT and WI.

The protein belongs to the purine/pyrimidine phosphoribosyltransferase family. XGPT subfamily. In terms of assembly, homotetramer. Mg(2+) serves as cofactor.

The protein localises to the cell inner membrane. It carries out the reaction GMP + diphosphate = guanine + 5-phospho-alpha-D-ribose 1-diphosphate. The enzyme catalyses XMP + diphosphate = xanthine + 5-phospho-alpha-D-ribose 1-diphosphate. The catalysed reaction is IMP + diphosphate = hypoxanthine + 5-phospho-alpha-D-ribose 1-diphosphate. It participates in purine metabolism; GMP biosynthesis via salvage pathway; GMP from guanine: step 1/1. It functions in the pathway purine metabolism; XMP biosynthesis via salvage pathway; XMP from xanthine: step 1/1. Purine salvage pathway enzyme that catalyzes the transfer of the ribosyl-5-phosphate group from 5-phospho-alpha-D-ribose 1-diphosphate (PRPP) to the N9 position of the 6-oxopurines guanine and xanthine to form the corresponding ribonucleotides GMP (guanosine 5'-monophosphate) and XMP (xanthosine 5'-monophosphate), with the release of PPi. To a lesser extent, also acts on hypoxanthine. The chain is Xanthine-guanine phosphoribosyltransferase from Mannheimia succiniciproducens (strain KCTC 0769BP / MBEL55E).